The following is a 503-amino-acid chain: Interferon regulatory factor 7 (503 aa).

Positions 11-126 (RVLFGEWLLG…DPHKVYALSR (116 aa)) form a DNA-binding region, IRF tryptophan pentad repeat. Residues 69 to 88 (RWPPSSRGGGPPPEAETAER) form a disordered region. Lysine 92 carries the post-translational modification N6-acetyllysine; by KAT2A and KAT2B. Disordered stretches follow at residues 133 to 156 (GPGTDQTEAEAPAAVPPPQGGPPG) and 242 to 277 (TTPSPGPQPAALTTGEAAAPESPHQAEPYLSPSPSA). The span at 146-156 (AVPPPQGGPPG) shows a compositional bias: pro residues. The segment at 284 to 456 (PSPGALDVTI…SLVLVKLEPW (173 aa)) is necessary for the interaction with NMI. Residue lysine 375 forms a Glycyl lysine isopeptide (Lys-Gly) (interchain with G-Cter in ubiquitin) linkage. Residues lysine 444 and lysine 446 each participate in a glycyl lysine isopeptide (Lys-Gly) (interchain with G-Cter in SUMO) cross-link. Phosphoserine occurs at positions 471, 472, and 475. Phosphoserine; by TBK1 and IKKE is present on residues serine 477 and serine 479. Phosphoserine is present on residues serine 483, serine 484, and serine 487.

It belongs to the IRF family. As to quaternary structure, monomer. Homodimer; phosphorylation-induced. Heterodimer with IRF3. Interacts with TICAM1 and TICAM2. Interacts with MYD88 and TRAF6. Interacts with TRIM35. Interacts with NMI; the interaction is direct and leads to the inhibition of IRF7-mediated type I IFN production. Interacts with GBP4; preventing interaction between TRAF6 and IRF7, resulting in impaired TRAF6-mediated IRF7 ubiquitination. In terms of assembly, (Microbial infection) Interacts with Epstein-Barr virus LF2 and LMP1. (Microbial infection) Interacts with rotavirus A NSP1; this interaction leads to the proteasome-dependent degradation of IRF7. As to quaternary structure, (Microbial infection) Interacts with human herpes virus 8/HHV-8 proteins ORF45 and vIRF-1. In terms of assembly, (Microbial infection) Interacts with human T-cell leukemia virus 1/HTLV-1 protein HBZ. (Microbial infection) Interacts with Seneca Valley virus protease 3C; this interaction is involved in the suppression of IRF7 expression and phosphorylation by the virus. As to quaternary structure, (Microbial infection) Interacts with ebolavirus VP35; this interaction mediates the sumoylation of IRF7 and contributes to the viral inhibition of IFN-type I production. In terms of assembly, (Microbial infection) Interacts with severe fever with thrombocytopenia syndrome virus (SFTSV) NSs; this interaction sequesters IRF7 in NSs-induced cytoplasmic inclusion bodies. (Microbial infection) Interacts with herpes virus 8/HHV-8 protein vIRF-4; this interaction prevents IRF7 dimerization and subsequent activation. As to quaternary structure, (Microbial infection) Interacts with human metapneumovirus protein M2-2; this interaction prevents IRF7 phosphorlyation and subsequent TLR7/9-dependent IFN-alpha induction. Acetylation inhibits its DNA-binding ability and activity. Post-translationally, in response to a viral infection, phosphorylated on Ser-477 and Ser-479 by TBK1 and IKBKE1. Phosphorylation, and subsequent activation is inhibited by vaccinia virus protein E3. In TLR7- and TLR9-mediated signaling pathway, phosphorylated by IRAK1. In terms of processing, TRAF6-mediated ubiquitination is required for IRF7 activation. TRIM35 mediates IRF7 'Lys-48'-linked polyubiquitination and subsequent proteasomal degradation. Ubiquitinated by UBE3C, leading to its degradation. Sumoylated by TRIM28, which inhibits its transactivation activity. Post-translationally, (Microbial infection) Cleaved and inactivated by the protease 3C of enterovirus 71 allowing the virus to disrupt the host type I interferon production. In terms of processing, (Microbial infection) Cleaved and inactivated by the protease 3C of human enterovirus 68D (EV68) allowing the virus to disrupt the host type I interferon production. 'Lys-48'-linked polyubiquitination and subsequent proteasomal degradation is NMI-dependent in response to Sendai virus infection. Post-translationally, 'Lys-63'-linked ubiquitination by NEURL3 promotes IRF7 activation. In terms of tissue distribution, expressed predominantly in spleen, thymus and peripheral blood leukocytes.

Its subcellular location is the nucleus. The protein resides in the cytoplasm. With respect to regulation, in the absence of viral infection, maintained as a monomer in an autoinhibited state and phosphorylation disrupts this autoinhibition leading to the liberation of the DNA-binding and dimerization activities and its nuclear localization where it can activate type I IFN and ISG genes. Functionally, key transcriptional regulator of type I interferon (IFN)-dependent immune responses and plays a critical role in the innate immune response against DNA and RNA viruses. Regulates the transcription of type I IFN genes (IFN-alpha and IFN-beta) and IFN-stimulated genes (ISG) by binding to an interferon-stimulated response element (ISRE) in their promoters. Can efficiently activate both the IFN-beta (IFNB) and the IFN-alpha (IFNA) genes and mediate their induction via both the virus-activated, MyD88-independent pathway and the TLR-activated, MyD88-dependent pathway. Induces transcription of ubiquitin hydrolase USP25 mRNA in response to lipopolysaccharide (LPS) or viral infection in a type I IFN-dependent manner. Required during both the early and late phases of the IFN gene induction but is more critical for the late than for the early phase. Exists in an inactive form in the cytoplasm of uninfected cells and following viral infection, double-stranded RNA (dsRNA), or toll-like receptor (TLR) signaling, becomes phosphorylated by IKBKE and TBK1 kinases. This induces a conformational change, leading to its dimerization and nuclear localization where along with other coactivators it can activate transcription of the type I IFN and ISG genes. Can also play a role in regulating adaptive immune responses by inducing PSMB9/LMP2 expression, either directly or through induction of IRF1. Binds to the Q promoter (Qp) of EBV nuclear antigen 1 a (EBNA1) and may play a role in the regulation of EBV latency. Can activate distinct gene expression programs in macrophages and regulate the anti-tumor properties of primary macrophages. In Homo sapiens (Human), this protein is Interferon regulatory factor 7 (IRF7).